The following is a 144-amino-acid chain: MTEQKQVKKPSARRRARECTVQALYSWAVSGNTAEQVELAFVLDQDMDGVDKPYFRKLFRQTVENIETVDFSISPYIDRAFDELDPIETAILRLAVYELCFELDVPYKVVINEAIEVAKVFGADESHKYINGVLDKIAPALGRK.

It belongs to the NusB family.

Functionally, involved in transcription antitermination. Required for transcription of ribosomal RNA (rRNA) genes. Binds specifically to the boxA antiterminator sequence of the ribosomal RNA (rrn) operons. This chain is Transcription antitermination protein NusB, found in Haemophilus influenzae (strain 86-028NP).